We begin with the raw amino-acid sequence, 405 residues long: Phosphoglycerate kinase (405 aa).

Substrate-binding positions include 21 to 23 (DFN), R36, 59 to 62 (HLGR), R119, and R161. ATP is bound by residues K212, G301, E332, and 361 to 364 (GGDS).

Belongs to the phosphoglycerate kinase family. In terms of assembly, monomer.

The protein localises to the cytoplasm. The enzyme catalyses (2R)-3-phosphoglycerate + ATP = (2R)-3-phospho-glyceroyl phosphate + ADP. The protein operates within carbohydrate degradation; glycolysis; pyruvate from D-glyceraldehyde 3-phosphate: step 2/5. The chain is Phosphoglycerate kinase from Leuconostoc mesenteroides subsp. mesenteroides (strain ATCC 8293 / DSM 20343 / BCRC 11652 / CCM 1803 / JCM 6124 / NCDO 523 / NBRC 100496 / NCIMB 8023 / NCTC 12954 / NRRL B-1118 / 37Y).